Here is an 840-residue protein sequence, read N- to C-terminus: Phosphatidylglycerol lysyltransferase (840 aa).

The Cytoplasmic portion of the chain corresponds to 1–8 (MNQEVKNK). A helical membrane pass occupies residues 9–29 (IFSILKITFATALFIFVAITL). Residues 30 to 52 (YRELSGINFKDTLVEFSKINRMS) are Extracellular-facing. Residues 53 to 73 (LVLLFIGGGASLVILSMYDVI) form a helical membrane-spanning segment. Topologically, residues 74-89 (LSRALKMDISLGKVLR) are cytoplasmic. Residues 90 to 110 (VSYIINALNAIVGFGGFIGAG) traverse the membrane as a helical segment. Over 111-128 (VRAMVYKNYTHDKKKLVH) the chain is Extracellular. The chain crosses the membrane as a helical span at residues 129-149 (FISLILISMLTGLSLLSLLIV). Residues 150 to 161 (FHVFDASLILDK) are Cytoplasmic-facing. The helical transmembrane segment at 162–182 (ITWVRWVLYVVSFFLPLFIIY) threads the bilayer. Over 183–200 (SMVRPPDKNNRFVGLYCT) the chain is Extracellular. A helical transmembrane segment spans residues 201–221 (LVSCVEWLAAAVVLYFCGVIV). Residues 222 to 229 (DAHVSFMS) are Cytoplasmic-facing. Residues 230–250 (FIAIFIIAALSGLVSFIPGGF) form a helical membrane-spanning segment. Topologically, residues 251–271 (GAFDLVVLLGFKTLGVPEEKV) are extracellular. A helical transmembrane segment spans residues 272 to 292 (LLMLLLYRFAYYFVPVIIALI). At 293 to 337 (LSSFEFGTSAKKYIEGSKYFIPAKDVTSFLMSYQKDIIAKIPSLS) the chain is on the cytoplasmic side. Residues 338–358 (LAILVFFTSMIFFVNNLTIVY) form a helical membrane-spanning segment. Over 359–369 (DALYDGNHLTY) the chain is Extracellular. Residues 370–390 (YILLAIHTSACLLLLLNVVGI) form a helical membrane-spanning segment. Over 391 to 394 (YKQS) the chain is Cytoplasmic. The next 2 helical transmembrane spans lie at 395-415 (RRAIIFAMISILLITVATFFT) and 416-436 (YASYILITWLAIIFVLLIVAF). Residues 437-450 (RRARRLKRPVRMRN) are Cytoplasmic-facing. Residues 451-471 (IVAMLLFSLFILYVNHIFIAG) form a helical membrane-spanning segment. Residues 472-489 (TLYALDIYTIEMHTSVLR) are Extracellular-facing. A helical membrane pass occupies residues 490–510 (YYFWLTILIIAIIIGMIAWLF). The Cytoplasmic segment spans residues 511–840 (DYQFSKVRIS…SKVMRVIRHK (330 aa)).

It belongs to the LPG synthase family.

The protein resides in the cell membrane. The enzyme catalyses L-lysyl-tRNA(Lys) + a 1,2-diacyl-sn-glycero-3-phospho-(1'-sn-glycerol) = a 1,2-diacyl-sn-glycero-3-phospho-1'-(3'-O-L-lysyl)-sn-glycerol + tRNA(Lys). In terms of biological role, catalyzes the transfer of a lysyl group from L-lysyl-tRNA(Lys) to membrane-bound phosphatidylglycerol (PG), which produces lysylphosphatidylglycerol (LPG), a major component of the bacterial membrane with a positive net charge. LPG synthesis contributes to bacterial virulence as it is involved in the resistance mechanism against cationic antimicrobial peptides (CAMP) produces by the host's immune system (defensins, cathelicidins) and by the competing microorganisms (bacteriocins). In fact, the modification of anionic phosphatidylglycerol with positively charged L-lysine results in repulsion of the peptides. This chain is Phosphatidylglycerol lysyltransferase (mprF), found in Staphylococcus aureus (strain COL).